Here is a 619-residue protein sequence, read N- to C-terminus: DNA mismatch repair protein MutL (619 aa).

Belongs to the DNA mismatch repair MutL/HexB family.

Functionally, this protein is involved in the repair of mismatches in DNA. It is required for dam-dependent methyl-directed DNA mismatch repair. May act as a 'molecular matchmaker', a protein that promotes the formation of a stable complex between two or more DNA-binding proteins in an ATP-dependent manner without itself being part of a final effector complex. The sequence is that of DNA mismatch repair protein MutL from Shewanella frigidimarina (strain NCIMB 400).